The following is a 441-amino-acid chain: Probable D-serine dehydratase (441 aa).

An N6-(pyridoxal phosphate)lysine modification is found at lysine 101.

This sequence belongs to the serine/threonine dehydratase family. DsdA subfamily. Pyridoxal 5'-phosphate serves as cofactor.

The enzyme catalyses D-serine = pyruvate + NH4(+). In Geobacillus kaustophilus (strain HTA426), this protein is Probable D-serine dehydratase.